Consider the following 362-residue polypeptide: Protein RecA (362 aa).

An ATP-binding site is contributed by 65–72 (GPESSGKT). Residues 323–362 (RVANGMEPLNEKSTKETADDKASGKTGENKQETIEEASKE) are disordered. Positions 331 to 362 (LNEKSTKETADDKASGKTGENKQETIEEASKE) are enriched in basic and acidic residues.

The protein belongs to the RecA family.

Its subcellular location is the cytoplasm. Its function is as follows. Can catalyze the hydrolysis of ATP in the presence of single-stranded DNA, the ATP-dependent uptake of single-stranded DNA by duplex DNA, and the ATP-dependent hybridization of homologous single-stranded DNAs. It interacts with LexA causing its activation and leading to its autocatalytic cleavage. In Limosilactobacillus reuteri (strain DSM 20016) (Lactobacillus reuteri), this protein is Protein RecA.